A 187-amino-acid polypeptide reads, in one-letter code: Lysozyme C-like protein DDB_G0288143 (187 aa).

Positions 1 to 23 are cleaved as a signal peptide; it reads MKVSNLISTITIASALCLSLTNA. Cystine bridges form between Cys50–Cys125, Cys74–Cys82, and Cys78–Cys97. The active site involves Glu55. The interval 133-187 is disordered; sequence QHGSHSSTSRDSSSSSSRDSTGTGYSSSGSGTSGSGSNSGQTGHFIPGQSGHGLN. Residues 136-175 are compositionally biased toward low complexity; sequence SHSSTSRDSSSSSSRDSTGTGYSSSGSGTSGSGSNSGQTG.

It belongs to the glycosyl hydrolase 22 family.

This chain is Lysozyme C-like protein DDB_G0288143, found in Dictyostelium discoideum (Social amoeba).